Consider the following 154-residue polypeptide: Methylglyoxal synthase (154 aa).

An MGS-like domain is found at 6–154 (QSLPAKKNIA…KYLATRQIDI (149 aa)). Residues H19, K23, 45–48 (TGTT), and 65–66 (SG) contribute to the substrate site. The active-site Proton donor/acceptor is the D71. Residue H98 participates in substrate binding.

The protein belongs to the methylglyoxal synthase family.

The catalysed reaction is dihydroxyacetone phosphate = methylglyoxal + phosphate. In terms of biological role, catalyzes the formation of methylglyoxal from dihydroxyacetone phosphate. In Pseudoalteromonas translucida (strain TAC 125), this protein is Methylglyoxal synthase.